A 99-amino-acid chain; its full sequence is Evasin P1162 (99 aa).

The N-terminal stretch at 1 to 28 is a signal peptide; sequence MEVKTFAFLQIAVCIAIGIELICAGTNA. 3 disulfide bridges follow: cysteine 40/cysteine 59, cysteine 44/cysteine 61, and cysteine 55/cysteine 72. N-linked (GlcNAc...) asparagine glycans are attached at residues asparagine 43, asparagine 49, asparagine 58, and asparagine 85.

The protein resides in the secreted. Its function is as follows. Salivary chemokine-binding protein which binds to host chemokines CXCL1, CXCL2, CXCL3, CXCL5 and CXCL8. In Ixodes ricinus (Common tick), this protein is Evasin P1162.